A 235-amino-acid polypeptide reads, in one-letter code: 2-C-methyl-D-erythritol 4-phosphate cytidylyltransferase (235 aa).

The protein belongs to the IspD/TarI cytidylyltransferase family. IspD subfamily. As to quaternary structure, homodimer.

The catalysed reaction is 2-C-methyl-D-erythritol 4-phosphate + CTP + H(+) = 4-CDP-2-C-methyl-D-erythritol + diphosphate. It functions in the pathway isoprenoid biosynthesis; isopentenyl diphosphate biosynthesis via DXP pathway; isopentenyl diphosphate from 1-deoxy-D-xylulose 5-phosphate: step 2/6. In terms of biological role, catalyzes the formation of 4-diphosphocytidyl-2-C-methyl-D-erythritol from CTP and 2-C-methyl-D-erythritol 4-phosphate (MEP). The chain is 2-C-methyl-D-erythritol 4-phosphate cytidylyltransferase from Blochmanniella pennsylvanica (strain BPEN).